The primary structure comprises 291 residues: Putative transport permease ycf38 (291 aa).

Helical transmembrane passes span 47 to 67 (ATLM…GGLF), 87 to 107 (SGII…PLMF), 135 to 155 (FMTC…LFMG), 165 to 185 (MIFG…SLAL), 195 to 215 (LLAF…ALAP), and 262 to 282 (ICLG…AYLV). An ABC transmembrane type-2 domain is found at 47-289 (ATLMAGIIQP…YLVSNILKAK (243 aa)).

This sequence belongs to the ABC-2 integral membrane protein family.

Its subcellular location is the plastid. The protein localises to the chloroplast membrane. This Pyropia yezoensis (Susabi-nori) protein is Putative transport permease ycf38 (ycf38).